The chain runs to 88 residues: Kunitz-type U15-theraphotoxin-Hhn1r (88 aa).

Positions 1-27 are cleaved as a signal peptide; that stretch reads MGIARILSAVLFLSVLFVVTFPTLLSA. Residues 28–33 constitute a propeptide that is removed on maturation; that stretch reads DHHDGR. The region spanning 37–85 is the BPTI/Kunitz inhibitor domain; it reads CRLPSDRGRCKASFERWYFNGTTCTKFVYGGYGGNDNRFPTEKACMKRC. Cystine bridges form between cysteine 37-cysteine 85 and cysteine 60-cysteine 81.

The protein belongs to the venom Kunitz-type family. 01 (intermediate) subfamily. Expressed by the venom gland.

Its subcellular location is the secreted. Functionally, serine protease inhibitor that inhibits trypsin at a molar ratio of 1:1. The sequence is that of Kunitz-type U15-theraphotoxin-Hhn1r from Cyriopagopus hainanus (Chinese bird spider).